The primary structure comprises 252 residues: Chaplin-A (252 aa).

An N-terminal signal peptide occupies residues 1-20 (MVAAAAATGILSLCGSPALA). One can recognise a Chaplin 1 domain in the interval 31 to 71 (SPGAVSGNALQVPVDVPVNACGNTVDVIAALNPAFGNECEN). Disordered stretches follow at residues 71–121 (NASD…GNNA) and 150–224 (CEND…GSEG). Low complexity predominate over residues 86–108 (EDASSSSSSSTSASSSGSHADGA). Residues 112 to 152 (SPGVGSGNNAQVPVDVPVNLCGNTVDVIAALNPVFGNKCEN) form the Chaplin 2 domain. A compositionally biased stretch (acidic residues) spans 153–165 (DAEEPPGYGEEEP). The segment covering 210-224 (QTEQPPALAETGSEG) has biased composition (low complexity). Residues 217–221 (LAETG) carry the LPXTG sorting signal motif. 2 consecutive propeptides (removed by sortase) follow at residues 219 to 252 (ETGSEGTLGAAAAGAVLIAGGAILYRRGRALSGR) and 221 to 252 (GSEGTLGAAAAGAVLIAGGAILYRRGRALSGR). Pentaglycyl murein peptidoglycan amidated threonine is present on threonine 220.

Belongs to the chaplin family. Long chaplin subfamily.

It localises to the secreted. The protein resides in the cell wall. Functionally, one of 8 partially redundant surface-active proteins required for efficient formation of aerial mycelium; the short chaplins assemble into a hydrophobic, amyloidal fibrillar surface layer that envelopes and protects aerial hyphae and spores, presumably anchored to the long chaplins. Chaplins have an overlapping function with the surface-active SapB peptide; chaplins are essential on minimal medium while on rich medium both chaplins and SapB are required for efficient aerial hyphae formation. A minimal chaplin strain capable of forming aerial mycelium/hyphae on minimal medium contains ChpC, ChpE and ChpH. The strain also has restored rodlet formation on the hyphae surface. A second minimal chaplin strain with ChpA, ChpD and ChpE makes slightly less robust hyphae. The long chaplins (ChpA, ChpB, ChpC) are not absolutely necessary for short chaplin localization or rodlet formation, but probably play a role in initiating aerial hyphae development. Chaplins are also involved in cell attachment to a hydrophobic surface. This is Chaplin-A from Streptomyces coelicolor (strain ATCC BAA-471 / A3(2) / M145).